The following is a 760-amino-acid chain: Forkhead box protein M1 (760 aa).

Disordered stretches follow at residues 1 to 54 (MRTS…AESS) and 95 to 167 (GKES…SYAG). 2 stretches are compositionally biased toward low complexity: residues 43–54 (PAQASQEVAESS) and 110–124 (SSGG…PQAH). Positions 125 to 134 (SSRDSKRAEV) are enriched in basic and acidic residues. A compositionally biased stretch (low complexity) spans 140 to 149 (GPKPAAKGVP). Residues Lys-199 and Lys-323 each participate in a glycyl lysine isopeptide (Lys-Gly) (interchain with G-Cter in SUMO2) cross-link. A DNA-binding region (fork-head) is located at residues 233 to 325 (ERPPYSYMAM…LTLDQVFKPL (93 aa)). The disordered stretch occupies residues 323-348 (KPLEPGSPQSPEHLESQQKRPNPELH). A Phosphoserine modification is found at Ser-329. The span at 334–348 (EHLESQQKRPNPELH) shows a compositional bias: basic and acidic residues. Lys-354 is covalently cross-linked (Glycyl lysine isopeptide (Lys-Gly) (interchain with G-Cter in SUMO2)). Residue Ser-374 is modified to Phosphoserine; by CHEK2. Residues Lys-420 and Lys-438 each participate in a glycyl lysine isopeptide (Lys-Gly) (interchain with G-Cter in SUMO2) cross-link. Disordered stretches follow at residues 500-560 (SWED…PDLF), 577-635 (ESSE…LDFS), and 660-709 (PLKS…IPSL). At Ser-521 the chain carries Phosphoserine. The segment covering 531–542 (VTKRREKREVSR) has biased composition (basic and acidic residues). Residues 604–613 (PVSSTPSKSV) show a composition bias toward polar residues. Thr-608 is modified (phosphothreonine; by CDK1). Thr-624 carries the post-translational modification Phosphothreonine. 2 positions are modified to phosphoserine; by PLK1: Ser-727 and Ser-736.

Post-translationally, phosphorylated in M (mitotic) phase. Phosphorylation by the checkpoint kinase CHEK2 in response to DNA damage increases the FOXM1 protein stability probably stimulating the transcription of genes involved in DNA repair. Phosphorylated by CDK1 in late S and G2 phases, creating docking sites for the POLO box domains of PLK1. Subsequently, PLK1 binds and phosphorylates FOXM1, leading to activation of transcriptional activity and subsequent enhanced expression of key mitotic regulators. Phosphorylated by GSK3B leading to ubiquitination and proteasomal degradation. Expressed in fetal heart, brain, liver, lung, kidney and limb, but only in adult thymus. Appears to be expressed only in adult organs containing proliferating/cycling cells or in response to growth factors.

The protein localises to the nucleus. Its function is as follows. Transcription factor regulating the expression of cell cycle genes essential for DNA replication and mitosis. Plays a role in the control of cell proliferation. Also plays a role in DNA break repair, participating in the DNA damage checkpoint response. Promotes transcription of PHB2. This is Forkhead box protein M1 (Foxm1) from Mus musculus (Mouse).